The following is a 3387-amino-acid chain: Genome polyprotein (3387 aa).

Residues 1-100 (MNQRKKVVRP…LNILNGRKRS (100 aa)) lie on the Cytoplasmic side of the membrane. The hydrophobic; homodimerization of capsid protein C stretch occupies residues 36 to 71 (LFSGKGPLRMVLAFITFLRVLSIPPTAGILKRWGQL). Positions 100-113 (STITLLCLIPTVMA) are cleaved as a propeptide — ER anchor for the capsid protein C, removed in mature form by serine protease NS3. The chain crosses the membrane as a helical span at residues 101–117 (TITLLCLIPTVMAFSLS). The Extracellular segment spans residues 118–237 (TRDGEPLMIV…GAWKHAQRVE (120 aa)). A glycan (N-linked (GlcNAc...) asparagine; by host) is linked at asparagine 182. A helical transmembrane segment spans residues 238 to 258 (SWILRNPGFALLAGFMAYMIG). Residues 259-265 (QTGIQRT) lie on the Cytoplasmic side of the membrane. The chain crosses the membrane as a helical span at residues 266 to 279 (VFFVLMMLVAPSYG). Topologically, residues 280–725 (MRCVGVGNRD…HQVFGSVYTT (446 aa)) are extracellular. Cystine bridges form between cysteine 282/cysteine 309, cysteine 339/cysteine 400, cysteine 353/cysteine 384, and cysteine 371/cysteine 395. N-linked (GlcNAc...) asparagine; by host glycosylation occurs at asparagine 346. The interval 377–390 (DRGWGNGCGLFGKG) is fusion peptide. An N-linked (GlcNAc...) asparagine; by host glycan is attached at asparagine 432. 2 disulfide bridges follow: cysteine 464/cysteine 564 and cysteine 581/cysteine 612. Residues 726–746 (MFGGVSWMIRILIGFLVLWIG) traverse the membrane as a helical segment. At 747–751 (TNSRN) the chain is on the cytoplasmic side. Residues 752–772 (TSMAMTCIAVGGITLFLGFTV) form a helical membrane-spanning segment. Topologically, residues 773–1194 (QADMGCVASW…MLGDTMSGRI (422 aa)) are extracellular. 6 disulfides stabilise this stretch: cysteine 778-cysteine 789, cysteine 829-cysteine 917, cysteine 953-cysteine 997, cysteine 1054-cysteine 1103, cysteine 1065-cysteine 1087, and cysteine 1086-cysteine 1090. 2 N-linked (GlcNAc...) asparagine; by host glycosylation sites follow: asparagine 904 and asparagine 981. Residues 1195-1218 (GGQIHLAIMAVFKMSPGYVLGVFL) traverse the membrane as a helical segment. Topologically, residues 1219 to 1224 (RKLTSR) are lumenal. A helical membrane pass occupies residues 1225-1243 (ETALMVIGMAMTTVLSIPH). Residues 1244–1267 (DLMELIDGISLGLILLKIVTQFDN) lie on the Cytoplasmic side of the membrane. The helical transmembrane segment at 1268-1288 (TQVGTLALSLTFIRSTMPLVM) threads the bilayer. Residue alanine 1289 is a topological domain, lumenal. Residues 1290–1308 (WRTIMAVLFVVTLIPLCRT) traverse the membrane as a helical segment. Residues 1309-1316 (SCLQKQSH) are Lumenal-facing. Residues 1317–1337 (WVEITALILGAQALPVYLMTL) traverse the membrane as a helical segment. At 1338–1345 (MKGASRRS) the chain is on the cytoplasmic side. Residues 1346–1366 (WPLNEGIMAVGLVSLLGSALL) form a helical membrane-spanning segment. Residues 1367–1369 (KND) are Lumenal-facing. Residues 1370–1390 (VPLAGPMVAGGLLLAAYVMSG) form a helical membrane-spanning segment. Residues 1391–1437 (SSADLSLEKAANVQWDEMADITGSSPIIEVKQDEDGSFSIRDVEETN) are Cytoplasmic-facing. The interval 1397-1436 (LEKAANVQWDEMADITGSSPIIEVKQDEDGSFSIRDVEET) is interacts with and activates NS3 protease. Residues 1438-1458 (MITLLVKLALITVSGLYPLAI) constitute an intramembrane region (helical). The Cytoplasmic segment spans residues 1459–2143 (PVTMTLWYMW…QHALNELPES (685 aa)). The Peptidase S7 domain occupies 1475 to 1652 (SGALWDVPSP…ERIGEPDYEV (178 aa)). Active-site charge relay system; for serine protease NS3 activity residues include histidine 1525, aspartate 1549, and serine 1609. A Helicase ATP-binding domain is found at 1654–1810 (EDIFRKKRLT…QSNSPIEDIE (157 aa)). The important for RNA-binding stretch occupies residues 1658–1661 (RKKR). 1667–1674 (LHPGAGKT) is an ATP binding site. The DEAH box signature appears at 1758–1761 (DEAH). Residues 1820 to 1987 (TGFDWITDYQ…IIPTLFGPER (168 aa)) enclose the Helicase C-terminal domain. Lysine 1862 is subject to N6-acetyllysine; by host. Residues 2144 to 2164 (LETLMLVALLGAMTAGIFLFF) traverse the membrane as a helical segment. Residues 2165–2169 (MQGKG) lie on the Lumenal side of the membrane. Residues 2170–2190 (IGKLSMGLITIAVASGLLWVA) constitute an intramembrane region (helical). Glutamate 2191 is a topological domain (lumenal). A helical transmembrane segment spans residues 2192–2212 (IQPQWIAASIILEFFLMVLLI). Residues 2213-2225 (PEPEKQRTPQDNQ) are Cytoplasmic-facing. A helical membrane pass occupies residues 2226–2246 (LIYVILTILTIIGLIAANEMG). Topologically, residues 2247-2270 (LIEKTKTDFGFYQVKTETTILDVD) are lumenal. Residues 2271–2291 (LRPASAWTLYAVATTILTPML) constitute an intramembrane region (helical). The Lumenal portion of the chain corresponds to 2292–2301 (RHTIENTSAN). N-linked (GlcNAc...) asparagine; by host glycans are attached at residues asparagine 2297 and asparagine 2301. Residues 2302–2322 (LSLAAIANQAAVLMGLGKGWP) constitute an intramembrane region (helical). The Lumenal portion of the chain corresponds to 2323–2343 (LHRMDLGVPLLAMGCYSQVNP). A helical transmembrane segment spans residues 2344–2364 (TTLTASLVMLLVHYAIIGPGL). Topologically, residues 2365-2409 (QAKATREAQKRTAAGIMKNPTVDGITVIDLEPISYDPKFEKQLGQ) are cytoplasmic. Residues 2410 to 2430 (VMLLVLCAGQLLLMRTTWAFC) form a helical membrane-spanning segment. At 2431–2455 (EVLTLATGPILTLWEGNPGRFWNTT) the chain is on the lumenal side. Asparagine 2453 carries an N-linked (GlcNAc...) asparagine; by host glycan. A helical transmembrane segment spans residues 2456–2476 (IAVSTANIFRGSYLAGAGLAF). The Cytoplasmic portion of the chain corresponds to 2477–3387 (SLIKNAQTPR…SAPSESEGVL (911 aa)). The region spanning 2489 to 2751 (TGTTGETLGE…DVDLGAGTRS (263 aa)) is the mRNA cap 0-1 NS5-type MT domain. Serine 2543 contributes to the S-adenosyl-L-methionine binding site. Serine 2543 is modified (phosphoserine). The For 2'-O-MTase activity role is filled by lysine 2548. Residues 2564–2567 (VVDL) carry the SUMO-interacting motif motif. The S-adenosyl-L-methionine site is built by glycine 2573, tryptophan 2574, threonine 2591, lysine 2592, aspartate 2618, and valine 2619. The For 2'-O-MTase activity role is filled by aspartate 2633. S-adenosyl-L-methionine is bound at residue isoleucine 2634. Catalysis depends on for 2'-O-MTase activity residues lysine 2668 and glutamate 2704. S-adenosyl-L-methionine is bound at residue tyrosine 2706. 4 residues coordinate Zn(2+): glutamate 2925, histidine 2929, cysteine 2934, and cysteine 2937. The RdRp catalytic domain maps to 3016–3166 (LMYADDTAGW…PLDERFGTSL (151 aa)). Histidine 3200, cysteine 3216, and cysteine 3335 together coordinate Zn(2+).

It in the N-terminal section; belongs to the class I-like SAM-binding methyltransferase superfamily. mRNA cap 0-1 NS5-type methyltransferase family. As to quaternary structure, homodimer. Interacts (via N-terminus) with host EXOC1 (via C-terminus); this interaction results in EXOC1 degradation through the proteasome degradation pathway. In terms of assembly, forms heterodimers with envelope protein E in the endoplasmic reticulum and Golgi. Homodimer; in the endoplasmic reticulum and Golgi. Interacts with protein prM. Interacts with non-structural protein 1. As to quaternary structure, homodimer; Homohexamer when secreted. Interacts with envelope protein E. In terms of assembly, interacts (via N-terminus) with serine protease NS3. Forms a heterodimer with serine protease NS3. May form homooligomers. As to quaternary structure, forms a heterodimer with NS2B. Interacts with NS4B. Interacts with unphosphorylated RNA-directed RNA polymerase NS5; this interaction stimulates RNA-directed RNA polymerase NS5 guanylyltransferase activity. Interacts with host SHFL. In terms of assembly, interacts with host MAVS; this interaction inhibits the synthesis of IFN-beta. Interacts with host SHFL. Interacts with host AUP1; the interaction occurs in the presence of Dengue virus NS4B and induces lipophagy which facilitates production of virus progeny particles. Interacts with serine protease NS3. As to quaternary structure, homodimer. Interacts with host STAT2; this interaction inhibits the phosphorylation of the latter, and, when all viral proteins are present (polyprotein), targets STAT2 for degradation. Interacts with serine protease NS3. Interacts with host PAF1 complex; the interaction may prevent the recruitment of the PAF1 complex to interferon-responsive genes, and thus reduces the immune response. Post-translationally, specific enzymatic cleavages in vivo yield mature proteins. Cleavages in the lumen of endoplasmic reticulum are performed by host signal peptidase, whereas cleavages in the cytoplasmic side are performed by serine protease NS3. Signal cleavage at the 2K-4B site requires a prior NS3 protease-mediated cleavage at the 4A-2K site. In terms of processing, cleaved in post-Golgi vesicles by a host furin, releasing the mature small envelope protein M, and peptide pr. This cleavage is incomplete as up to 30% of viral particles still carry uncleaved prM. N-glycosylated. Post-translationally, N-glycosylated. The excreted form is glycosylated and this is required for efficient secretion of the protein from infected cells. In terms of processing, acetylated by host KAT5. Acetylation modulates NS3 RNA-binding and unwinding activities and plays an important positive role for viral replication. Sumoylation of RNA-directed RNA polymerase NS5 increases NS5 protein stability allowing proper viral RNA replication. Post-translationally, phosphorylated on serines residues. This phosphorylation may trigger NS5 nuclear localization.

It localises to the virion. The protein localises to the host nucleus. It is found in the host cytoplasm. The protein resides in the host perinuclear region. Its subcellular location is the secreted. It localises to the virion membrane. The protein localises to the host endoplasmic reticulum membrane. It is found in the host mitochondrion. The enzyme catalyses Selective hydrolysis of -Xaa-Xaa-|-Yaa- bonds in which each of the Xaa can be either Arg or Lys and Yaa can be either Ser or Ala.. It carries out the reaction RNA(n) + a ribonucleoside 5'-triphosphate = RNA(n+1) + diphosphate. It catalyses the reaction a ribonucleoside 5'-triphosphate + H2O = a ribonucleoside 5'-diphosphate + phosphate + H(+). The catalysed reaction is ATP + H2O = ADP + phosphate + H(+). The enzyme catalyses a 5'-end (5'-triphosphoguanosine)-ribonucleoside in mRNA + S-adenosyl-L-methionine = a 5'-end (N(7)-methyl 5'-triphosphoguanosine)-ribonucleoside in mRNA + S-adenosyl-L-homocysteine. It carries out the reaction a 5'-end (N(7)-methyl 5'-triphosphoguanosine)-ribonucleoside in mRNA + S-adenosyl-L-methionine = a 5'-end (N(7)-methyl 5'-triphosphoguanosine)-(2'-O-methyl-ribonucleoside) in mRNA + S-adenosyl-L-homocysteine + H(+). In terms of biological role, plays a role in virus budding by binding to the cell membrane and gathering the viral RNA into a nucleocapsid that forms the core of a mature virus particle. During virus entry, may induce genome penetration into the host cytoplasm after hemifusion induced by the surface proteins. Can migrate to the cell nucleus where it modulates host functions. Overcomes the anti-viral effects of host EXOC1 by sequestering and degrading the latter through the proteasome degradation pathway. Regulates the ATPase activity of the NS3 helicase activity. NS4A allows NS3 helicase to conserve energy during unwinding. Plays a role in the inhibition of the host innate immune response. Interacts with host MAVS and thereby prevents the interaction between RIGI and MAVS. In turn, IFN-beta production is impaired. Interacts with host AUP1 which mediates induction of lipophagy in host cells and facilitates production of virus progeny particles. Functionally, inhibits RNA silencing by interfering with host Dicer. Its function is as follows. Prevents premature fusion activity of envelope proteins in trans-Golgi by binding to envelope protein E at pH6.0. After virion release in extracellular space, gets dissociated from E dimers. In terms of biological role, acts as a chaperone for envelope protein E during intracellular virion assembly by masking and inactivating envelope protein E fusion peptide. prM is the only viral peptide matured by host furin in the trans-Golgi network probably to avoid catastrophic activation of the viral fusion activity in acidic Golgi compartment prior to virion release. prM-E cleavage is inefficient, and many virions are only partially matured. These uncleaved prM would play a role in immune evasion. May play a role in virus budding. Exerts cytotoxic effects by activating a mitochondrial apoptotic pathway through M ectodomain. May display a viroporin activity. Functionally, binds to host cell surface receptor and mediates fusion between viral and cellular membranes. Envelope protein is synthesized in the endoplasmic reticulum in the form of heterodimer with protein prM. They play a role in virion budding in the ER, and the newly formed immature particle is covered with 60 spikes composed of heterodimer between precursor prM and envelope protein E. The virion is transported to the Golgi apparatus where the low pH causes dissociation of PrM-E heterodimers and formation of E homodimers. prM-E cleavage is inefficient, and many virions are only partially matured. These uncleaved prM would play a role in immune evasion. Its function is as follows. Involved in immune evasion, pathogenesis and viral replication. Once cleaved off the polyprotein, is targeted to three destinations: the viral replication cycle, the plasma membrane and the extracellular compartment. Essential for viral replication. Required for formation of the replication complex and recruitment of other non-structural proteins to the ER-derived membrane structures. Excreted as a hexameric lipoparticle that plays a role against host immune response. Antagonizing the complement function. Binds to the host macrophages and dendritic cells. Inhibits signal transduction originating from Toll-like receptor 3 (TLR3). In terms of biological role, disrupts the host endothelial glycocalyx layer of host pulmonary microvascular endothelial cells, inducing degradation of sialic acid and shedding of heparan sulfate proteoglycans. NS1 induces expression of sialidases, heparanase, and activates cathepsin L, which activates heparanase via enzymatic cleavage. These effects are probably linked to the endothelial hyperpermeability observed in severe dengue disease. Component of the viral RNA replication complex that functions in virion assembly and antagonizes the host immune response. Functionally, required cofactor for the serine protease function of NS3. May have membrane-destabilizing activity and form viroporins. Its function is as follows. Displays three enzymatic activities: serine protease, NTPase and RNA helicase. NS3 serine protease, in association with NS2B, performs its autocleavage and cleaves the polyprotein at dibasic sites in the cytoplasm: C-prM, NS2A-NS2B, NS2B-NS3, NS3-NS4A, NS4A-2K and NS4B-NS5. NS3 RNA helicase binds RNA and unwinds dsRNA in the 3' to 5' direction. In terms of biological role, functions as a signal peptide for NS4B and is required for the interferon antagonism activity of the latter. Induces the formation of ER-derived membrane vesicles where the viral replication takes place. Inhibits interferon (IFN)-induced host STAT1 phosphorylation and nuclear translocation, thereby preventing the establishment of cellular antiviral state by blocking the IFN-alpha/beta pathway. Functionally, replicates the viral (+) and (-) RNA genome, and performs the capping of genomes in the cytoplasm. NS5 methylates viral RNA cap at guanine N-7 and ribose 2'-O positions. Besides its role in RNA genome replication, also prevents the establishment of cellular antiviral state by blocking the interferon-alpha/beta (IFN-alpha/beta) signaling pathway. Inhibits host TYK2 and STAT2 phosphorylation, thereby preventing activation of JAK-STAT signaling pathway. May reduce immune responses by preventing the recruitment of the host PAF1 complex to interferon-responsive genes. This chain is Genome polyprotein, found in Dengue virus type 4 (strain Dominica/814669/1981) (DENV-4).